Consider the following 420-residue polypeptide: D-tagatose-1,6-bisphosphate aldolase subunit GatZ (420 aa).

It belongs to the GatZ/KbaZ family. GatZ subfamily. In terms of assembly, forms a complex with GatY.

It participates in carbohydrate metabolism; D-tagatose 6-phosphate degradation; D-glyceraldehyde 3-phosphate and glycerone phosphate from D-tagatose 6-phosphate: step 2/2. Its function is as follows. Component of the tagatose-1,6-bisphosphate aldolase GatYZ that is required for full activity and stability of the Y subunit. Could have a chaperone-like function for the proper and stable folding of GatY. When expressed alone, GatZ does not show any aldolase activity. Is involved in the catabolism of galactitol. The protein is D-tagatose-1,6-bisphosphate aldolase subunit GatZ of Escherichia coli O6:K15:H31 (strain 536 / UPEC).